The primary structure comprises 309 residues: Ras-like protein 1 (309 aa).

Residues 20 to 25, 36 to 42, 66 to 67, 123 to 126, and 153 to 155 each bind GTP; these read GVGKSA, VDEYDPT, AG, NKLD, and SAK. Residues 39 to 47 carry the Effector region motif; the sequence is YDPTIEDSY. Positions 177–303 are disordered; that stretch reads KYNSMNRQLD…SANARKESSG (127 aa). Polar residues-rich tracts occupy residues 179 to 188 and 209 to 235; these read NSMNRQLDNT and NGSY…NHNG. Basic and acidic residues predominate over residues 236 to 245; that stretch reads ETTKRTDEKN. A compositionally biased stretch (low complexity) spans 246-256; sequence YVNQNNNNEGN. Over residues 257–296 the composition is skewed to polar residues; it reads TKYSSNGNGNRSDISRGNQNNALNSRSKQSAEPQKNSSAN. C305 carries the S-palmitoyl cysteine lipid modification. At C306 the chain carries Cysteine methyl ester. C306 carries S-farnesyl cysteine lipidation. Residues 307–309 constitute a propeptide, removed in mature form; the sequence is IIC.

This sequence belongs to the small GTPase superfamily. Ras family. Post-translationally, farnesylated by RAM1-RAM2, which is required for targeting RAS1 to the cytoplasmic site of the endoplasmic reticulum, where proteolytic processing of the C-terminus by RCE1 and methylation of the resulting carboxyl group by STE14 occurs. In terms of processing, palmitoylated by the ERF2-SHR5 complex, which is required for proper plasma membrane localization of RAS1.

The protein localises to the cell membrane. It catalyses the reaction GTP + H2O = GDP + phosphate + H(+). Its activity is regulated as follows. Alternates between an inactive form bound to GDP and an active form bound to GTP. Activated by guanine nucleotide-exchange factor (GEF) CDC25 and inactivated by GTPase-activating proteins (GAPs) IRA1 and IRA2. The S.cerevisiae Ras proteins modulate the activity of the adenylate cyclase catalytic subunit and therefore affect the biosynthesis of cyclic-AMP. This chain is Ras-like protein 1 (RAS1), found in Saccharomyces cerevisiae (strain ATCC 204508 / S288c) (Baker's yeast).